The chain runs to 232 residues: Sugar fermentation stimulation protein homolog (232 aa).

It belongs to the SfsA family.

The chain is Sugar fermentation stimulation protein homolog from Pyrobaculum arsenaticum (strain DSM 13514 / JCM 11321 / PZ6).